Here is a 441-residue protein sequence, read N- to C-terminus: ATP-dependent RNA helicase sub2 (441 aa).

Positions 19–29 (DAAATTAAPAA) are enriched in low complexity. The segment at 19–43 (DAAATTAAPAANGAQDKKGDLTVSG) is disordered. A Q motif motif is present at residues 58–86 (TGFRDFLLKGELLRAITDCGFEHPSEVQQ). The 176-residue stretch at 89-264 (IPTAILNVDV…KKFMRNPLEV (176 aa)) folds into the Helicase ATP-binding domain. ATP is bound at residue 102 to 109 (AKSGLGKT). Residues 211 to 214 (DECD) carry the DEAD box motif. The 162-residue stretch at 276–437 (GLQQYYIKLS…EYPEGGVDSS (162 aa)) folds into the Helicase C-terminal domain.

Belongs to the DEAD box helicase family. DECD subfamily.

The protein resides in the nucleus. It carries out the reaction ATP + H2O = ADP + phosphate + H(+). ATP-binding RNA helicase involved in transcription elongation and required for the export of mRNA out of the nucleus. SUB2 also plays a role in pre-mRNA splicing and spliceosome assembly. May be involved in rDNA and telomeric silencing, and maintenance of genome integrity. This Aspergillus clavatus (strain ATCC 1007 / CBS 513.65 / DSM 816 / NCTC 3887 / NRRL 1 / QM 1276 / 107) protein is ATP-dependent RNA helicase sub2 (sub2).